We begin with the raw amino-acid sequence, 156 residues long: ATP synthase subunit b (156 aa).

A helical transmembrane segment spans residues 7-27; the sequence is LIVQMLVFVVFIGLTMKFIWP.

It belongs to the ATPase B chain family. F-type ATPases have 2 components, F(1) - the catalytic core - and F(0) - the membrane proton channel. F(1) has five subunits: alpha(3), beta(3), gamma(1), delta(1), epsilon(1). F(0) has three main subunits: a(1), b(2) and c(10-14). The alpha and beta chains form an alternating ring which encloses part of the gamma chain. F(1) is attached to F(0) by a central stalk formed by the gamma and epsilon chains, while a peripheral stalk is formed by the delta and b chains.

It is found in the cell inner membrane. Functionally, f(1)F(0) ATP synthase produces ATP from ADP in the presence of a proton or sodium gradient. F-type ATPases consist of two structural domains, F(1) containing the extramembraneous catalytic core and F(0) containing the membrane proton channel, linked together by a central stalk and a peripheral stalk. During catalysis, ATP synthesis in the catalytic domain of F(1) is coupled via a rotary mechanism of the central stalk subunits to proton translocation. Its function is as follows. Component of the F(0) channel, it forms part of the peripheral stalk, linking F(1) to F(0). The polypeptide is ATP synthase subunit b (Coxiella burnetii (strain CbuK_Q154) (Coxiella burnetii (strain Q154))).